Here is a 923-residue protein sequence, read N- to C-terminus: Hexokinase-3 (923 aa).

Polar residues predominate over residues 1–18; that stretch reads MDSIGSSGLRQGEETLSC. Residues 1-30 are disordered; it reads MDSIGSSGLRQGEETLSCSEEGLPGPSDSS. Hexokinase domains are found at residues 27–471 and 477–912; these read SDSS…MVTA and AAHR…LVTA. A hexokinase small subdomain 1 region spans residues 84–220; sequence HGTEQGDFVV…AYNIDVVAVV (137 aa). 95 to 102 contacts ATP; sequence ELGATGAS. 95-104 lines the D-glucose 6-phosphate pocket; sequence ELGATGASLR. Residues Ser168, 185–186, and 221–222 each bind D-glucose; these read TK and ND. The segment at 221 to 460 is hexokinase large subdomain 1; sequence NDTVGTMMGC…CDVSLIPSVD (240 aa). Asp222 and Thr245 together coordinate D-glucose 6-phosphate. D-glucose contacts are provided by residues Asn248, Glu273, and 304 to 307; that span reads QRFE. 426–428 contacts D-glucose 6-phosphate; it reads GGR. Residues 438–439 and 542–547 contribute to the ATP site; these read SV and DLGGTN. The interval 531 to 661 is hexokinase small subdomain 2; the sequence is DGSERGDFLA…AVELNVVAIV (131 aa). D-glucose 6-phosphate is bound at residue 542 to 546; the sequence is DLGGT. D-glucose is bound by residues 609 to 610, 626 to 627, and 662 to 663; these read SF, TK, and ND. The tract at residues 662-901 is hexokinase large subdomain 2; it reads NDTVGTMMSC…CVVTFLQSED (240 aa). 2 residues coordinate D-glucose 6-phosphate: Asp663 and Thr686. Thr686 lines the ATP pocket. D-glucose contacts are provided by residues 688–689, Glu714, and Glu748; that span reads TN. ATP is bound by residues 753–754, 790–794, and 869–873; these read GM, TKFLS, and TLYKL. Residues 867–869 and Ser903 each bind D-glucose 6-phosphate; that span reads DGT.

The protein belongs to the hexokinase family.

The enzyme catalyses a D-hexose + ATP = a D-hexose 6-phosphate + ADP + H(+). It carries out the reaction D-fructose + ATP = D-fructose 6-phosphate + ADP + H(+). The catalysed reaction is D-glucose + ATP = D-glucose 6-phosphate + ADP + H(+). It participates in carbohydrate metabolism; hexose metabolism. Its pathway is carbohydrate degradation; glycolysis; D-glyceraldehyde 3-phosphate and glycerone phosphate from D-glucose: step 1/4. Hexokinase is an allosteric enzyme inhibited by its product D-glucose 6-phosphate. In terms of biological role, catalyzes the phosphorylation of hexose, such as D-glucose and D-fructose, to hexose 6-phosphate (D-glucose 6-phosphate and D-fructose 6-phosphate, respectively). Mediates the initial step of glycolysis by catalyzing phosphorylation of D-glucose to D-glucose 6-phosphate. This Homo sapiens (Human) protein is Hexokinase-3.